The chain runs to 84 residues: Small ribosomal subunit protein uS17 (84 aa).

This sequence belongs to the universal ribosomal protein uS17 family. Part of the 30S ribosomal subunit.

Its function is as follows. One of the primary rRNA binding proteins, it binds specifically to the 5'-end of 16S ribosomal RNA. The chain is Small ribosomal subunit protein uS17 from Shigella boydii serotype 18 (strain CDC 3083-94 / BS512).